We begin with the raw amino-acid sequence, 455 residues long: Probable xyloglucan galactosyltransferase GT17 (455 aa).

The Cytoplasmic segment spans residues 1–34; it reads MTFNKRQVKINHWPEKNDKEKQKYSKNRETVKLT. A helical; Signal-anchor for type II membrane protein membrane pass occupies residues 35–55; the sequence is LLTLLLLCSICFLFLTLNFPF. At 56–455 the chain is on the lumenal side; it reads TIEFTASIPR…QARDNVVVSL (400 aa). Residues N70, N169, N230, N390, and N426 are each glycosylated (N-linked (GlcNAc...) asparagine).

It belongs to the glycosyltransferase 47 family. As to expression, expressed in roots and hypocotyls.

The protein localises to the golgi apparatus membrane. Its function is as follows. Functions in xyloglucan synthesis by adding side chains to the xylosylated glucan backbone. Involved in the galactosylation of hemicellulose xyloglucan. The chain is Probable xyloglucan galactosyltransferase GT17 from Arabidopsis thaliana (Mouse-ear cress).